The chain runs to 1032 residues: Probable ATP-dependent RNA helicase DDX46 (1032 aa).

Residues Met1–Ser24 are compositionally biased toward basic residues. Positions Met1 to Pro227 are disordered. Gly2 carries N-myristoyl glycine lipidation. The segment covering Ser26–Arg49 has biased composition (basic and acidic residues). 2 stretches are compositionally biased toward basic residues: residues Glu50–Ser73 and Glu81–Arg103. A compositionally biased stretch (basic and acidic residues) spans Lys112–Leu200. A coiled-coil region spans residues Asp152–Lys197. Lys186 is covalently cross-linked (Glycyl lysine isopeptide (Lys-Gly) (interchain with G-Cter in SUMO2)). Ser199 is modified (phosphoserine). A compositionally biased stretch (acidic residues) spans Glu201–Ala211. Lys263 bears the N6-acetyllysine mark. Residue Tyr294 is modified to Phosphotyrosine. Ser295 and Ser296 each carry phosphoserine. Residue Lys325 forms a Glycyl lysine isopeptide (Lys-Gly) (interchain with G-Cter in SUMO2) linkage. Ser346 carries the post-translational modification Phosphoserine. The short motif at Lys372–Thr400 is the Q motif element. Residues Ile403–Val581 enclose the Helicase ATP-binding domain. The DEAD box motif lies at Asp529–Asp532. The region spanning Asp592–Trp753 is the Helicase C-terminal domain. An N6-acetyllysine modification is found at Lys776. A Glycyl lysine isopeptide (Lys-Gly) (interchain with G-Cter in SUMO2) cross-link involves residue Lys779. The residue at position 804 (Ser804) is a Phosphoserine. Residue Lys904 is modified to N6-acetyllysine. Glycyl lysine isopeptide (Lys-Gly) (interchain with G-Cter in SUMO2) cross-links involve residues Lys908 and Lys916. The residue at position 929 (Ser929) is a Phosphoserine.

The protein belongs to the DEAD box helicase family. DDX46/PRP5 subfamily. As to quaternary structure, component of the 17S U2 SnRNP complex, a ribonucleoprotein complex that contains small nuclear RNA (snRNA) U2 and a number of specific proteins. Within the 17S U2 SnRNP complex, DDX46 is part of the SF3B subcomplex, which is required for 'A' complex assembly formed by the stable binding of U2 snRNP to the branchpoint sequence in pre-mRNA. Recruited to the 17S U2 SnRNP complex following release of DDX42; DDX42 and DDX46 bind the SF3B subcomplex in a competitive manner.

It localises to the nucleus speckle. It is found in the nucleus. The protein localises to the cajal body. It catalyses the reaction ATP + H2O = ADP + phosphate + H(+). Component of the 17S U2 SnRNP complex of the spliceosome, a large ribonucleoprotein complex that removes introns from transcribed pre-mRNAs. The 17S U2 SnRNP complex (1) directly participates in early spliceosome assembly and (2) mediates recognition of the intron branch site during pre-mRNA splicing by promoting the selection of the pre-mRNA branch-site adenosine, the nucleophile for the first step of splicing. Within the 17S U2 SnRNP complex, DDX46 plays essential roles during assembly of pre-spliceosome and proofreading of the branch site. The sequence is that of Probable ATP-dependent RNA helicase DDX46 (Ddx46) from Rattus norvegicus (Rat).